The primary structure comprises 138 residues: Small ribosomal subunit protein bS6 (138 aa).

Residues 94 to 138 (VKQDGPLPTPKPTSKENEPEKEEVKPTEEKTESPSKDEKKEDSKE) are disordered. A compositionally biased stretch (basic and acidic residues) spans 106-138 (TSKENEPEKEEVKPTEEKTESPSKDEKKEDSKE).

The protein belongs to the bacterial ribosomal protein bS6 family.

Binds together with bS18 to 16S ribosomal RNA. The chain is Small ribosomal subunit protein bS6 from Prochlorococcus marinus (strain NATL2A).